Reading from the N-terminus, the 360-residue chain is MLLLLAEYLQQFHKGFAVFQYLTLRGILGVLTALSLALWLGPWMIRTLQIRQIGQAVRNDGPQSHLSKSGTPTMGGALILSAIAISTLLWADLTNRYVWVVLIVTLAFGAIGWVDDYRKVIEKNSRGLPSRWKYFWQSVFGLAAAIFLYKTAPTSVETTLIIPMLKDLAIPLGAGFIVLTYFVIVGSSNAVNLTDGLDGLAIMPTVMVGGALGIFCYLSGNVKFAEYLLIPYVPGAGELIVFCGALIGAGLGFLWFNTYPAQVFMGDVGALALGAALGTIAVIVRQEVVLFIMGGVFVMETLSVVIQVASFKLTGKRVFRMAPIHHHFELKGWPEPRVIVRFWIITVILVLIGLATLKLR.

The next 10 helical transmembrane spans lie at 25–45, 73–93, 97–117, 134–154, 168–188, 199–219, 236–256, 263–283, 288–308, and 338–358; these read RGILGVLTALSLALWLGPWMI, TMGGALILSAIAISTLLWADL, YVWVVLIVTLAFGAIGWVDDY, YFWQSVFGLAAAIFLYKTAPT, LAIPLGAGFIVLTYFVIVGSS, GLAIMPTVMVGGALGIFCYLS, AGELIVFCGALIGAGLGFLWF, VFMGDVGALALGAALGTIAVI, VVLFIMGGVFVMETLSVVIQV, and VIVRFWIITVILVLIGLATLK.

This sequence belongs to the glycosyltransferase 4 family. MraY subfamily. The cofactor is Mg(2+).

The protein localises to the cell inner membrane. The enzyme catalyses UDP-N-acetyl-alpha-D-muramoyl-L-alanyl-gamma-D-glutamyl-meso-2,6-diaminopimeloyl-D-alanyl-D-alanine + di-trans,octa-cis-undecaprenyl phosphate = di-trans,octa-cis-undecaprenyl diphospho-N-acetyl-alpha-D-muramoyl-L-alanyl-D-glutamyl-meso-2,6-diaminopimeloyl-D-alanyl-D-alanine + UMP. It functions in the pathway cell wall biogenesis; peptidoglycan biosynthesis. Its function is as follows. Catalyzes the initial step of the lipid cycle reactions in the biosynthesis of the cell wall peptidoglycan: transfers peptidoglycan precursor phospho-MurNAc-pentapeptide from UDP-MurNAc-pentapeptide onto the lipid carrier undecaprenyl phosphate, yielding undecaprenyl-pyrophosphoryl-MurNAc-pentapeptide, known as lipid I. This is Phospho-N-acetylmuramoyl-pentapeptide-transferase from Pseudomonas entomophila (strain L48).